Here is a 542-residue protein sequence, read N- to C-terminus: Cytochrome P450 monooxygenase sdnH (542 aa).

The chain crosses the membrane as a helical span at residues 25 to 45 (LYVAGGILGAFTVYSIILVVY). The interval 141–160 (IIPPRGLGQEDSIGSTRSHD) is disordered. Residues 340-360 (FMGAGTYPTAATLIFVAYYIL) traverse the membrane as a helical segment. A heme-binding site is contributed by Cys483. The N-linked (GlcNAc...) asparagine glycan is linked to Asn506.

The protein belongs to the cytochrome P450 family. Requires heme as cofactor.

The protein localises to the membrane. Its pathway is antibiotic biosynthesis. Cytochrome P450 monooxygenase; part of the gene cluster that mediates the biosynthesis of sordarin and hypoxysordarin, glycoside antibiotics with a unique tetracyclic diterpene aglycone structure. First, the geranylgeranyl diphosphate synthase sdnC constructs GGDP from farnesyl diphosphate and isopentenyl diphosphate. The diterpene cyclase sdnA then catalyzes the cyclization of GGDP to afford cycloaraneosene. Cycloaraneosene is then hydroxylated four times by the putative cytochrome P450 monooxygenases sdnB, sdnE, sdnF and sdnH to give a hydroxylated cycloaraneosene derivative such as cycloaraneosene-8,9,13,19-tetraol. Although the order of the hydroxylations is unclear, at least C8, C9 and C13 of the cycloaraneosene skeleton are hydroxylated before the sordaricin formation. Dehydration of the 13-hydroxy group of the hydroxylated cycloaraneosene derivative might be catalyzed by an unassigned hypothetical protein such as sdnG and sdnP to construct the cyclopentadiene moiety. The FAD-dependent oxidoreductase sdnN is proposed to catalyze the oxidation at C9 of the hydroxylated cycloaraneosene derivative and also catalyze the Baeyer-Villiger oxidation to give the lactone intermediate. The presumed lactone intermediate would be hydrolyzed to give an acrolein moiety and a carboxylate moiety. Then, [4+2]cycloaddition would occur between the acrolein moiety and the cyclopentadiene moiety to give sordaricin. SdnN might also be involved in the [4+2]cycloaddition after the hypothesized oxidation to accommodate the oxidized product and prompt the [4+2]cycloaddition. GDP-6-deoxy-D-altrose may be biosynthesized from GDP-D-mannose by the putative GDP-mannose-4,6-dehydratase sdnI and the short-chain dehydrogenase sdnK. The glycosyltransferase sdnJ catalyzes the attachment of 6-deoxy-D-altrose onto the 19-hydroxy group of sordaricin to give 4'-O-demethylsordarin. The methyltransferase sdnD would complete the biosynthesis of sordarin. Sordarin can be further modified into hypoxysordarin. The unique acyl chain at the 3'-hydroxy group of hypoxysordarin would be constructed by an iterative type I PKS sdnO and the trans-acting polyketide methyltransferase sdnL. SdnL would be responsible for the introduction of an alpha-methyl group of the polyketide chain. Alternatively, the beta-lactamase-like protein sdnR might be responsible for the cleavage and transfer of the polyketide chain from the PKS sdnO to sordarin. Two putative cytochrome P450 monooxygenases, sdnQ and sdnT, might catalyze the epoxidations of the polyketide chain to complete the biosynthesis of hypoxysordarin. Transcriptional regulators sdnM and sdnS are presumably encoded for the transcriptional regulation of the expression of the sdn gene cluster. The protein is Cytochrome P450 monooxygenase sdnH of Sordaria araneosa (Pleurage araneosa).